Consider the following 364-residue polypeptide: Alpha-2-HS-glycoprotein (364 aa).

Residues 1–15 constitute a signal peptide (or 17); it reads MKSFLLLFCLAQLCS. The 107-residue stretch at 27 to 133 folds into the Cystatin fetuin-A-type 1 domain; the sequence is YKEPACDDPD…QFSVLFTKCD (107 aa). Cystine bridges form between cysteine 32/cysteine 355, cysteine 89/cysteine 100, cysteine 114/cysteine 132, cysteine 146/cysteine 149, cysteine 208/cysteine 219, and cysteine 230/cysteine 248. Asparagine 99 carries N-linked (GlcNAc...) asparagine glycosylation. Phosphoserine occurs at positions 134, 135, and 138. Positions 144-256 constitute a Cystatin fetuin-A-type 2 domain; sequence KLCPDCPLLA…TCTLFQTQPV (113 aa). Residues asparagine 156 and asparagine 176 are each glycosylated (N-linked (GlcNAc...) asparagine). A glycan (O-linked (GalNAc...) serine) is linked at serine 301. At threonine 319 the chain carries Phosphothreonine. 4 positions are modified to phosphoserine: serine 321, serine 325, serine 328, and serine 330. Residue threonine 339 is glycosylated (O-linked (GalNAc...) threonine).

This sequence belongs to the fetuin family. Post-translationally, phosphorylated by FAM20C in the extracellular medium.

It is found in the secreted. The chain is Alpha-2-HS-glycoprotein (AHSG) from Ovis aries (Sheep).